The primary structure comprises 98 residues: NADH-ubiquinone oxidoreductase chain 4L (98 aa).

3 helical membrane passes run 1–21, 29–49, and 61–81; these read MSMV…GLLM, SLLC…LTIL, and IILL…LVMV.

Belongs to the complex I subunit 4L family. As to quaternary structure, core subunit of respiratory chain NADH dehydrogenase (Complex I) which is composed of 45 different subunits.

The protein localises to the mitochondrion inner membrane. It carries out the reaction a ubiquinone + NADH + 5 H(+)(in) = a ubiquinol + NAD(+) + 4 H(+)(out). In terms of biological role, core subunit of the mitochondrial membrane respiratory chain NADH dehydrogenase (Complex I) which catalyzes electron transfer from NADH through the respiratory chain, using ubiquinone as an electron acceptor. Part of the enzyme membrane arm which is embedded in the lipid bilayer and involved in proton translocation. This is NADH-ubiquinone oxidoreductase chain 4L (MT-ND4L) from Bos mutus grunniens (Wild yak).